Consider the following 795-residue polypeptide: Phenylalanine--tRNA ligase beta subunit (795 aa).

Positions 39–148 (AGAFHGVVVG…ADAPIGTDIR (110 aa)) constitute a tRNA-binding domain. The region spanning 401–476 (PTRATITLRR…RIYGYNNIPN (76 aa)) is the B5 domain. Asp-454, Asp-460, Glu-463, and Glu-464 together coordinate Mg(2+). The 94-residue stretch at 701–794 (SRFPANRRDI…LKQRFQASLR (94 aa)) folds into the FDX-ACB domain.

This sequence belongs to the phenylalanyl-tRNA synthetase beta subunit family. Type 1 subfamily. As to quaternary structure, tetramer of two alpha and two beta subunits. Requires Mg(2+) as cofactor.

It localises to the cytoplasm. It catalyses the reaction tRNA(Phe) + L-phenylalanine + ATP = L-phenylalanyl-tRNA(Phe) + AMP + diphosphate + H(+). This chain is Phenylalanine--tRNA ligase beta subunit, found in Pectobacterium atrosepticum (strain SCRI 1043 / ATCC BAA-672) (Erwinia carotovora subsp. atroseptica).